Here is a 207-residue protein sequence, read N- to C-terminus: Lipid A acyltransferase PagP (207 aa).

The N-terminal stretch at 1-24 (MKFDLTAACTLSATLLVSSGTVFA) is a signal peptide. Catalysis depends on residues His-79, Asp-122, and Ser-123.

Belongs to the lipid A palmitoyltransferase family. In terms of assembly, homodimer.

The protein resides in the cell outer membrane. It catalyses the reaction a lipid A + a 1,2-diacyl-sn-glycero-3-phosphocholine = a hepta-acyl lipid A + a 2-acyl-sn-glycero-3-phosphocholine. It carries out the reaction a lipid IVA + a 1,2-diacyl-sn-glycero-3-phosphocholine = a lipid IVB + a 2-acyl-sn-glycero-3-phosphocholine. The enzyme catalyses a lipid IIA + a 1,2-diacyl-sn-glycero-3-phosphocholine = a lipid IIB + a 2-acyl-sn-glycero-3-phosphocholine. Functionally, transfers a fatty acid residue from the sn-1 position of a phospholipid to the N-linked hydroxyfatty acid chain on the proximal unit of lipid A or its precursors. This chain is Lipid A acyltransferase PagP, found in Photorhabdus laumondii subsp. laumondii (strain DSM 15139 / CIP 105565 / TT01) (Photorhabdus luminescens subsp. laumondii).